The following is a 712-amino-acid chain: MCGRNQLFVASLLASACLIYCVQYVTVFYGVPVWRNASIPLFCATKNRDTWGTIQCLPDNDDYQEIALNVTEAFDAWNNTVTEQAVEDVWSLFETSIKPCVKLTPLCVAMRCNSTTAKNTTSTPTTTTTANTTIGENSSCIRTDNCTGLGEEEMVDCQFNMTGLERDKKKLYNETWYSKDVVCESKDTKKEKTCYMNHCNTSVITESCDKHYWDTMRFRYCAPPGFALLRCNDTNYSGFEPNCSKVVAATCTRMMETQTSTWFGFNGTRAENRTYIYWHGRDNRTIISLNKFYNLTILCKRPGNKTVVPITLMSGLVFHSQPINRRPRQAWCWFKGEWKEAMKEVKLTLAKHPRYKGTNDTEKIRFIAPGERSDPEVAYMWTNCRGEFLYCNMTWFLNWVENRTNQTQHNYVPCHIKQIINTWHKVGKNVYLPPREGQLTCNSTVTSIIANIDGGENQTNITFSAEVAELYRLELGDYKLIEVTPIGFAPTSIKRYSSAPVRNKRGVFVLGFLGFLTTAGAAMGAASLTLSAQSRTSLAGIVQQQQQLLDVVKRQQEMLRLTVWGTKNLQARVTAIEKYLKDQAQLNSWGCAFRQVCHTTVPWVNDTLTPDWNNITWQEWEQRIRNLEANISESLEQAQIQQEKNMYELQKLNSWDVFSNWFDLTSWIKYIQYGVYIVVGIIVLRMVIYVVQMLSRLRKGYRPVFSSPPAYS.

An N-terminal signal peptide occupies residues 1 to 24 (MCGRNQLFVASLLASACLIYCVQY). The Extracellular segment spans residues 25 to 673 (VTVFYGVPVW…LTSWIKYIQY (649 aa)). Asn-36 carries N-linked (GlcNAc...) asparagine; by host glycosylation. A disulfide bridge links Cys-43 with Cys-56. Residues Asn-69, Asn-78, Asn-113, Asn-119, Asn-131, Asn-137, Asn-145, Asn-160, Asn-173, Asn-200, Asn-232, Asn-235, Asn-242, Asn-266, Asn-272, Asn-283, Asn-294, Asn-304, Asn-359, Asn-392, Asn-402, Asn-405, Asn-442, Asn-457, and Asn-460 are each glycosylated (N-linked (GlcNAc...) asparagine; by host). 5 disulfide bridges follow: Cys-100/Cys-208, Cys-107/Cys-199, Cys-112/Cys-157, Cys-221/Cys-251, and Cys-231/Cys-243. The segment at 112-156 (CNSTTAKNTTSTPTTTTTANTTIGENSSCIRTDNCTGLGEEEMVD) is V1. The V2 stretch occupies residues 157–199 (CQFNMTGLERDKKKLYNETWYSKDVVCESKDTKKEKTCYMNHC). The interval 299-331 (CKRPGNKTVVPITLMSGLVFHSQPINRRPRQAW) is V3. Cys-299 and Cys-332 are disulfide-bonded. 2 disulfides stabilise this stretch: Cys-384-Cys-441 and Cys-391-Cys-414. The tract at residues 391-414 (CNMTWFLNWVENRTNQTQHNYVPC) is V4. Positions 457-463 (NQTNITF) are V5. A fusion peptide region spans residues 506-526 (GVFVLGFLGFLTTAGAAMGAA). Positions 569 to 585 (LQARVTAIEKYLKDQAQ) are immunosuppression. Asn-605, Asn-614, and Asn-630 each carry an N-linked (GlcNAc...) asparagine; by host glycan. Positions 614-646 (NITWQEWEQRIRNLEANISESLEQAQIQQEKNM) form a coiled coil. The tract at residues 651–672 (KLNSWDVFSNWFDLTSWIKYIQ) is MPER; binding to GalCer. The helical transmembrane segment at 674–694 (GVYIVVGIIVLRMVIYVVQML) threads the bilayer. At 695–712 (SRLRKGYRPVFSSPPAYS) the chain is on the cytoplasmic side. Positions 701 to 704 (YRPV) match the YXXV motif; contains endocytosis signal motif.

In terms of assembly, the mature envelope protein (Env) consists of a homotrimer of non-covalently associated gp120-gp41 heterodimers. The resulting complex protrudes from the virus surface as a spike. There seems to be as few as 10 spikes on the average virion. Interacts with human CD4, CCR5 and CXCR4, to form a P4HB/PDI-CD4-CXCR4-gp120 complex. Gp120 also interacts with the C-type lectins CD209/DC-SIGN and CLEC4M/DC-SIGNR (collectively referred to as DC-SIGN(R)). Gp120 and gp41 interact with GalCer. As to quaternary structure, the mature envelope protein (Env) consists of a homotrimer of non-covalently associated gp120-gp41 heterodimers. The resulting complex protrudes from the virus surface as a spike. There seems to be as few as 10 spikes on the average virion. Specific enzymatic cleavages in vivo yield mature proteins. Envelope glycoproteins are synthesized as an inactive precursor that is heavily N-glycosylated and processed likely by host cell furin in the Golgi to yield the mature SU and TM proteins. The cleavage site between SU and TM requires the minimal sequence [KR]-X-[KR]-R.

It is found in the virion membrane. The protein resides in the host cell membrane. Its subcellular location is the host endosome membrane. Functionally, the surface protein gp120 (SU) attaches the virus to the host lymphoid cell by binding to the primary receptor CD4. This interaction induces a structural rearrangement creating a high affinity binding site for a chemokine coreceptor like CXCR4 and/or CCR5. This peculiar 2 stage receptor-interaction strategy allows gp120 to maintain the highly conserved coreceptor-binding site in a cryptic conformation, protected from neutralizing antibodies. Since CD4 also displays a binding site for the disulfide-isomerase P4HB/PDI, a P4HB/PDI-CD4-CXCR4-gp120 complex may form. In that complex, P4HB/PDI could reach and reduce gp120 disulfide bonds, causing major conformational changes in gp120. TXN, another PDI family member could also be involved in disulfide rearrangements in Env during fusion. These changes are transmitted to the transmembrane protein gp41 and are thought to activate its fusogenic potential by unmasking its fusion peptide. In terms of biological role, the surface protein gp120 is a ligand for CD209/DC-SIGN and CLEC4M/DC-SIGNR, which are respectively found on dendritic cells (DCs), and on endothelial cells of liver sinusoids and lymph node sinuses. These interactions allow capture of viral particles at mucosal surfaces by these cells and subsequent transmission to permissive cells. DCs are professional antigen presenting cells, critical for host immunity by inducing specific immune responses against a broad variety of pathogens. They act as sentinels in various tissues where they take up antigen, process it, and present it to T-cells following migration to lymphoid organs. HIV subverts the migration properties of dendritic cells to gain access to CD4+ T-cells in lymph nodes. Virus transmission to permissive T-cells occurs either in trans (without DCs infection, through viral capture and transmission), or in cis (following DCs productive infection, through the usual CD4-gp120 interaction), thereby inducing a robust infection. In trans infection, bound virions remain infectious over days and it is proposed that they are not degraded, but protected in non-lysosomal acidic organelles within the DCs close to the cell membrane thus contributing to the viral infectious potential during DCs' migration from the periphery to the lymphoid tissues. On arrival at lymphoid tissues, intact virions recycle back to DCs' cell surface allowing virus transmission to CD4+ T-cells. Virion capture also seems to lead to MHC-II-restricted viral antigen presentation, and probably to the activation of HIV-specific CD4+ cells. Its function is as follows. The transmembrane protein gp41 (TM) acts as a class I viral fusion protein. Under the current model, the protein has at least 3 conformational states: pre-fusion native state, pre-hairpin intermediate state, and post-fusion hairpin state. During fusion of viral and target intracellular membranes, the coiled coil regions (heptad repeats) assume a trimer-of-hairpins structure, positioning the fusion peptide in close proximity to the C-terminal region of the ectodomain. The formation of this structure appears to drive apposition and subsequent fusion of viral and target cell membranes. Complete fusion occurs in host cell endosomes and is dynamin-dependent, however some lipid transfer might occur at the plasma membrane. The virus undergoes clathrin-dependent internalization long before endosomal fusion, thus minimizing the surface exposure of conserved viral epitopes during fusion and reducing the efficacy of inhibitors targeting these epitopes. Membranes fusion leads to delivery of the nucleocapsid into the cytoplasm. The envelope glycoprotein gp160 precursor down-modulates cell surface CD4 antigen by interacting with it in the endoplasmic reticulum and blocking its transport to the cell surface. Functionally, the gp120-gp41 heterodimer seems to contribute to T-cell depletion during HIV-1 infection. The envelope glycoproteins expressed on the surface of infected cells induce apoptosis through an interaction with uninfected cells expressing the receptor (CD4) and the coreceptors CXCR4 or CCR5. This type of bystander killing may be obtained by at least three distinct mechanisms. First, the interaction between the 2 cells can induce cellular fusion followed by nuclear fusion within the syncytium. Syncytia are condemned to die from apoptosis. Second, the 2 interacting cells may not fuse entirely and simply exchange plasma membrane lipids, after a sort of hemifusion process, followed by rapid death. Third, it is possible that virus-infected cells, on the point of undergoing apoptosis, fuse with CD4-expressing cells, in which case apoptosis is rapidly transmitted from one cell to the other and thus occurs in a sort of contagious fashion. In terms of biological role, the gp120-gp41 heterodimer allows rapid transcytosis of the virus through CD4 negative cells such as simple epithelial monolayers of the intestinal, rectal and endocervical epithelial barriers. Both gp120 and gp41 specifically recognize glycosphingolipids galactosyl-ceramide (GalCer) or 3' sulfo-galactosyl-ceramide (GalS) present in the lipid rafts structures of epithelial cells. Binding to these alternative receptors allows the rapid transcytosis of the virus through the epithelial cells. This transcytotic vesicle-mediated transport of virions from the apical side to the basolateral side of the epithelial cells does not involve infection of the cells themselves. The sequence is that of Envelope glycoprotein gp160 (env) from Homo sapiens (Human).